The primary structure comprises 404 residues: Probable eukaryotic initiation factor 4A (404 aa).

The segment at 1–28 (MAQQGKVEPQDQDSFLDDQPGIRPIPSF) is disordered. Positions 26–54 (PSFDDMPLHQNLLRGIYSHGFEKPSSIQQ) match the Q motif motif. Residues 57–231 (IVPFTRGGDI…KKFMRDPTRI (175 aa)) form the Helicase ATP-binding domain. An ATP-binding site is contributed by 70 to 77 (AQSGTGKT). The short motif at 179 to 182 (DEAD) is the DEAD box element. Residues 242–402 (GIKQFFIAVE…ELPVDFAAYL (161 aa)) enclose the Helicase C-terminal domain.

The protein belongs to the DEAD box helicase family. eIF4A subfamily. As to quaternary structure, eIF4F is a multi-subunit complex, the composition of which varies with external and internal environmental conditions. It is composed of at least EIF4A, EIF4E and EIF4G.

The enzyme catalyses ATP + H2O = ADP + phosphate + H(+). ATP-dependent RNA helicase which is a subunit of the eIF4F complex involved in cap recognition and is required for mRNA binding to ribosome. In the current model of translation initiation, eIF4A unwinds RNA secondary structures in the 5'-UTR of mRNAs which is necessary to allow efficient binding of the small ribosomal subunit, and subsequent scanning for the initiator codon. The polypeptide is Probable eukaryotic initiation factor 4A (Trypanosoma brucei brucei (strain 927/4 GUTat10.1)).